Here is a 702-residue protein sequence, read N- to C-terminus: Putative GMC-type oxidoreductase R135 (702 aa).

Residues L55 to L75 traverse the membrane as a helical segment. FAD is bound at residue D58 to A88. H628 is a catalytic residue.

This sequence belongs to the GMC oxidoreductase family. The cofactor is FAD.

The protein resides in the virion. It localises to the host membrane. In Acanthamoeba polyphaga (Amoeba), this protein is Putative GMC-type oxidoreductase R135.